The primary structure comprises 393 residues: NAD(P)H-quinone oxidoreductase subunit H, chloroplastic (393 aa).

The protein belongs to the complex I 49 kDa subunit family. As to quaternary structure, NDH is composed of at least 16 different subunits, 5 of which are encoded in the nucleus.

Its subcellular location is the plastid. The protein resides in the chloroplast thylakoid membrane. It carries out the reaction a plastoquinone + NADH + (n+1) H(+)(in) = a plastoquinol + NAD(+) + n H(+)(out). The enzyme catalyses a plastoquinone + NADPH + (n+1) H(+)(in) = a plastoquinol + NADP(+) + n H(+)(out). NDH shuttles electrons from NAD(P)H:plastoquinone, via FMN and iron-sulfur (Fe-S) centers, to quinones in the photosynthetic chain and possibly in a chloroplast respiratory chain. The immediate electron acceptor for the enzyme in this species is believed to be plastoquinone. Couples the redox reaction to proton translocation, and thus conserves the redox energy in a proton gradient. The protein is NAD(P)H-quinone oxidoreductase subunit H, chloroplastic of Lactuca sativa (Garden lettuce).